Here is a 227-residue protein sequence, read N- to C-terminus: Probable cell wall protein PGA42 (227 aa).

The signal sequence occupies residues 1–16; sequence MKFIILLFALIHITVA. Asparagine 192 carries an N-linked (GlcNAc...) asparagine glycan. Serine 200 carries the GPI-anchor amidated serine lipid modification. A propeptide spans 201-227 (removed in mature form); that stretch reads GSQIFVLCVISVVGFIFFFLFFLSLFV.

This sequence belongs to the IHD1 family. In terms of processing, the GPI-anchor is attached to the protein in the endoplasmic reticulum and serves to target the protein to the cell surface. There, the glucosamine-inositol phospholipid moiety is cleaved off and the GPI-modified mannoprotein is covalently attached via its lipidless GPI glycan remnant to the 1,6-beta-glucan of the outer cell wall layer.

It localises to the secreted. Its subcellular location is the cell wall. The protein localises to the membrane. Functionally, probable GPI-anchored cell wall protein that may be involved in cell wall organization, hyphal growth, as well as in virulence. This chain is Probable cell wall protein PGA42 (PGA42), found in Candida albicans (strain SC5314 / ATCC MYA-2876) (Yeast).